Reading from the N-terminus, the 532-residue chain is Type 2 DNA topoisomerase 6 subunit B (532 aa).

ATP contacts are provided by residues asparagine 41, aspartate 75, 96–97 (SK), 105–112 (GMYGLGVK), and lysine 427.

Belongs to the TOP6B family. In terms of assembly, homodimer. Heterotetramer of two Top6A and two Top6B chains.

It carries out the reaction ATP-dependent breakage, passage and rejoining of double-stranded DNA.. Functionally, relaxes both positive and negative superturns and exhibits a strong decatenase activity. In Sulfurisphaera tokodaii (strain DSM 16993 / JCM 10545 / NBRC 100140 / 7) (Sulfolobus tokodaii), this protein is Type 2 DNA topoisomerase 6 subunit B.